The following is a 46-amino-acid chain: Ligatoxin-B (46 aa).

3 disulfides stabilise this stretch: cysteine 3/cysteine 40, cysteine 4/cysteine 32, and cysteine 16/cysteine 26.

Belongs to the plant thionin (TC 1.C.44) family.

Its subcellular location is the secreted. Thionins are small plant proteins which are toxic to animal cells. They seem to exert their toxic effect at the level of the cell membrane. Their precise function is not known. In Phoradendron liga (Argentine mistletoe), this protein is Ligatoxin-B.